The chain runs to 379 residues: Guanine nucleotide-binding protein subunit alpha-12 (379 aa).

Residue Cys-11 is the site of S-palmitoyl cysteine attachment. The G-alpha domain maps to 54–379 (RLVKILLLGA…QENLKDIMLQ (326 aa)). The interval 57-70 (KILLLGAGESGKST) is G1 motif. Residues 65–70 (ESGKST) and 200–203 (LLAR) each bind GTP. Ser-69 provides a ligand contact to Mg(2+). The G2 motif stretch occupies residues 198–206 (DILLARKAT). Residue Thr-206 coordinates Mg(2+). Thr-206 carries the post-translational modification Phosphothreonine. The tract at residues 221–230 (FKMVDVGGQR) is G3 motif. The G4 motif stretch occupies residues 290-297 (ILFLNKMD). GTP is bound by residues 294 to 297 (NKMD) and Ala-351. Residues 349–354 (TTAIDT) form a G5 motif region.

It belongs to the G-alpha family. G(12) subfamily. As to quaternary structure, g proteins are composed of 3 units; alpha, beta and gamma. The alpha chain contains the guanine nucleotide binding site. Interacts with UBXD5. Interacts (in GTP-bound form) with PPP5C (via TPR repeats); activates PPP5C phosphatase activity and translocates PPP5C to the cell membrane. Interacts with RGS22. Interacts (via N-terminus) with NAPA; the interaction promotes CDH5 localization to plasma membrane. Interacts with CTNND1 (via N-terminus); the interaction regulates CDH1-mediated cell-cell adhesion. Interacts with PPP2R1A; the interaction promotes protein phosphatase 2A activation causing dephosphorylation of MAPT. Interacts (in GTP-bound form) with ARHGEF1. Interacts (in GTP-bound form) with ARHGEF11 (via RGS domain). Interacts (in GTP-bound form) with ARHGEF12 (via RGS domain).

The protein resides in the cell membrane. Its subcellular location is the lateral cell membrane. The protein localises to the cytoplasm. Functionally, guanine nucleotide-binding proteins (G proteins) are involved as modulators or transducers in various transmembrane signaling systems. Activates effector molecule RhoA by binding and activating RhoGEFs (ARHGEF12/LARG). GNA12-dependent Rho signaling subsequently regulates transcription factor AP-1 (activating protein-1). GNA12-dependent Rho signaling also regulates protein phosphatese 2A activation causing dephosphorylation of its target proteins. Promotes tumor cell invasion and metastasis by activating RhoA/ROCK signaling pathway and up-regulating pro-inflammatory cytokine production. Inhibits CDH1-mediated cell adhesion in process independent from Rho activation. Together with NAPA promotes CDH5 localization to plasma membrane. May play a role in the control of cell migration through the TOR signaling cascade. This Rattus norvegicus (Rat) protein is Guanine nucleotide-binding protein subunit alpha-12 (Gna12).